A 207-amino-acid polypeptide reads, in one-letter code: M-zodatoxin-Lt4a (207 aa).

The N-terminal stretch at 1 to 22 is a signal peptide; sequence MKFSIIALALAVAFVCVAESRS. A propeptide spanning residues 23–43 is cleaved from the precursor; the sequence is EEEGYDVSEEIQAEELEEAER. The short motif at 40-43 is the Processing quadruplet motif 1 element; sequence EAER. Glutamine 61 bears the Glutamine amide mark. The short motif at 63 to 66 is the Inverted processing quadruplet motif 1 element; it reads REDS. The propeptide occupies 63–71; it reads REDSEEAGR. The Processing quadruplet motif 2 signature appears at 68 to 71; sequence EAGR. At glutamine 89 the chain carries Glutamine amide. Positions 91–94 match the Inverted processing quadruplet motif 2 motif; the sequence is REDS. Positions 91 to 99 are excised as a propeptide; the sequence is REDSEEAGR. The short motif at 96–99 is the Processing quadruplet motif 3 element; the sequence is EAGR. Position 117 is a glutamine amide (glutamine 117). An Inverted processing quadruplet motif 3 motif is present at residues 119–122; it reads REDS. A propeptide spanning residues 119 to 127 is cleaved from the precursor; sequence REDSEEAGR. The Processing quadruplet motif 4 signature appears at 124-127; the sequence is EAGR. The residue at position 145 (glutamine 145) is a Glutamine amide. Positions 147–150 match the Inverted processing quadruplet motif 4 motif; that stretch reads REDS. Positions 147–155 are excised as a propeptide; the sequence is REDSEEAGR. The short motif at 152–155 is the Processing quadruplet motif 5 element; sequence EAGR. At glutamine 173 the chain carries Glutamine amide. The Inverted processing quadruplet motif 5 signature appears at 175-178; sequence REDT. The propeptide occupies 175 to 182; sequence REDTEEAR. The short motif at 179-182 is the Processing quadruplet motif 6 element; that stretch reads EEAR. Phenylalanine 206 is subject to Phenylalanine amide.

Belongs to the cationic peptide 03 (latarcin) family. 04 subfamily. In terms of processing, cleavage of the propeptide depends on the processing quadruplet motif (PQM) (XXXR, with at least one of X being E) and the inverted PQM (RXXX, with at least one of X being E). In terms of tissue distribution, expressed by the venom gland.

Its subcellular location is the secreted. Its function is as follows. M-zodatoxin-Lt4a: Has antimicrobial activity against Gram-positive bacteria (A.globiformis VKM Ac-1112 (MIC=0.3 uM), and B.subtilis VKM B-501 (MIC=1.1 uM)), Gram-negative bacteria (E.coli DH5-alpha (MIC=4.5 uM), E.coli MH1 (MIC=3.2 uM), and P.aeruginosa PAO1 (MIC&gt;35 uM)), and yeasts (P.pastoris GS115 (MIC=36 uM), and S.cerevisiae Y190 (MIC=18 uM)). Does not have hemolytic activity against rabbit erythrocytes. Causes paralysis, but is not lethal when injected into insect (M.domestica) larvae. In terms of biological role, shows no antimicrobial activity against Gram-positive bacterium B.subtilis B-501 or Gram-negative bacterium E.coli DH5-alpha at concentrations up to 20 uM. Shows no antimicrobial activity against Gram-positive bacterium B.subtilis B-501 or Gram-negative bacterium E.coli DH5-alpha at concentrations up to 20 uM. Shows no toxicity towards insect (S.carnaria) larvae. The polypeptide is M-zodatoxin-Lt4a (Lachesana tarabaevi (Spider)).